Here is a 430-residue protein sequence, read N- to C-terminus: RNA pseudouridine synthase 2, chloroplastic (430 aa).

A chloroplast-targeting transit peptide spans 1 to 43 (MLSISQLPSFSLTTAKSLRYPSSPSSSLSIFFSFFPKVSNFVR). The S4 RNA-binding domain occupies 82–155 (IRLDSWISSR…IPLDIVYEDK (74 aa)). The interval 195 to 222 (SNSEEDDDSDEETFSDDEEMTTSPSSYA) is disordered. The segment covering 196-214 (NSEEDDDSDEETFSDDEEM) has biased composition (acidic residues). The active site involves Asp234.

The protein belongs to the pseudouridine synthase RluA family.

It localises to the plastid. It is found in the chloroplast. The enzyme catalyses a uridine in RNA = a pseudouridine in RNA. This is RNA pseudouridine synthase 2, chloroplastic from Arabidopsis thaliana (Mouse-ear cress).